The following is a 403-amino-acid chain: Ribosomal RNA large subunit methyltransferase I (403 aa).

Residues 9–88 (YPRLILSKGR…ESIDIAFFTR (80 aa)) enclose the PUA domain.

It belongs to the methyltransferase superfamily. RlmI family.

The protein resides in the cytoplasm. The catalysed reaction is cytidine(1962) in 23S rRNA + S-adenosyl-L-methionine = 5-methylcytidine(1962) in 23S rRNA + S-adenosyl-L-homocysteine + H(+). Functionally, specifically methylates the cytosine at position 1962 (m5C1962) of 23S rRNA. The protein is Ribosomal RNA large subunit methyltransferase I of Salmonella paratyphi C (strain RKS4594).